The primary structure comprises 105 residues: DNA-directed RNA polymerase subunit Rpo13 (105 aa).

Composition is skewed to basic and acidic residues over residues 1–10 (MSEDDSKKEP) and 70–80 (FDDVARSYSKA). Disordered stretches follow at residues 1–35 (MSEDDSKKEPEPEETEAEIKHEEISREEDDEGGEF) and 70–105 (FDDVARSYSKADKKKRRVEKKPKKGKVTKKSDEEEE). The segment covering 81-97 (DKKKRRVEKKPKKGKVT) has biased composition (basic residues).

It belongs to the archaeal Rpo13 RNA polymerase subunit family. As to quaternary structure, part of the 13-subunit RNA polymerase.

Its subcellular location is the cytoplasm. The enzyme catalyses RNA(n) + a ribonucleoside 5'-triphosphate = RNA(n+1) + diphosphate. DNA-dependent RNA polymerase catalyzes the transcription of DNA into RNA using the four ribonucleoside triphosphates as substrates. In vitro binds dsDNA but not ssDNA. The polypeptide is DNA-directed RNA polymerase subunit Rpo13 (Sulfolobus acidocaldarius (strain ATCC 33909 / DSM 639 / JCM 8929 / NBRC 15157 / NCIMB 11770)).